Consider the following 143-residue polypeptide: Nucleoside diphosphate kinase (143 aa).

ATP is bound by residues lysine 11, phenylalanine 59, arginine 87, threonine 93, arginine 104, and asparagine 114. Histidine 117 acts as the Pros-phosphohistidine intermediate in catalysis.

This sequence belongs to the NDK family. Homotetramer. Mg(2+) serves as cofactor.

It localises to the cytoplasm. The enzyme catalyses a 2'-deoxyribonucleoside 5'-diphosphate + ATP = a 2'-deoxyribonucleoside 5'-triphosphate + ADP. The catalysed reaction is a ribonucleoside 5'-diphosphate + ATP = a ribonucleoside 5'-triphosphate + ADP. Major role in the synthesis of nucleoside triphosphates other than ATP. The ATP gamma phosphate is transferred to the NDP beta phosphate via a ping-pong mechanism, using a phosphorylated active-site intermediate. The polypeptide is Nucleoside diphosphate kinase (Azotobacter vinelandii (strain DJ / ATCC BAA-1303)).